Consider the following 201-residue polypeptide: MSRYTGPKWKLSRRLGISLSGTGKELARRPYAPGQHGNDRRGKISEYGMQLSEKQKLRLMYGLTERQFRNLFARAGKIREGKHGVNLMILLEQRLDNIVYRLGLASTRAQARQLVNHGHVTVDGKRVDIPSYEVKPGQEISIREKSKNLVIIKDAIEGTVGRPSFVEFDADNLKGSLVRLPERSELEPEIDEALIVEFYNR.

In terms of domain architecture, S4 RNA-binding spans 93–153 (QRLDNIVYRL…EKSKNLVIIK (61 aa)).

The protein belongs to the universal ribosomal protein uS4 family. Part of the 30S ribosomal subunit. Contacts protein S5. The interaction surface between S4 and S5 is involved in control of translational fidelity.

In terms of biological role, one of the primary rRNA binding proteins, it binds directly to 16S rRNA where it nucleates assembly of the body of the 30S subunit. Its function is as follows. With S5 and S12 plays an important role in translational accuracy. The polypeptide is Small ribosomal subunit protein uS4 (Latilactobacillus sakei subsp. sakei (strain 23K) (Lactobacillus sakei subsp. sakei)).